Here is an 83-residue protein sequence, read N- to C-terminus: Large ribosomal subunit protein bL27 (83 aa).

It belongs to the bacterial ribosomal protein bL27 family.

In Thermotoga maritima (strain ATCC 43589 / DSM 3109 / JCM 10099 / NBRC 100826 / MSB8), this protein is Large ribosomal subunit protein bL27 (rpmA).